Here is a 315-residue protein sequence, read N- to C-terminus: tRNA dimethylallyltransferase (315 aa).

Residue 10–17 coordinates ATP; it reads GPTEVGKT. 12–17 is a binding site for substrate; that stretch reads TEVGKT. The interval 35–38 is interaction with substrate tRNA; sequence DSMQ.

This sequence belongs to the IPP transferase family. In terms of assembly, monomer. Mg(2+) is required as a cofactor.

It carries out the reaction adenosine(37) in tRNA + dimethylallyl diphosphate = N(6)-dimethylallyladenosine(37) in tRNA + diphosphate. In terms of biological role, catalyzes the transfer of a dimethylallyl group onto the adenine at position 37 in tRNAs that read codons beginning with uridine, leading to the formation of N6-(dimethylallyl)adenosine (i(6)A). The polypeptide is tRNA dimethylallyltransferase (Geobacillus thermodenitrificans (strain NG80-2)).